We begin with the raw amino-acid sequence, 79 residues long: Secretory calcium-binding phosphoprotein proline-glutamine rich 1 (79 aa).

An N-terminal signal peptide occupies residues 1 to 15 (MKFLILAGLLSTATA).

It is found in the secreted. Tooth-associated epithelia protein that may participate in structuring the basal lamina at cell-tooth interface. The protein is Secretory calcium-binding phosphoprotein proline-glutamine rich 1 of Homo sapiens (Human).